We begin with the raw amino-acid sequence, 424 residues long: Virion nicking-joining enzyme (424 aa).

2 consecutive PLD phosphodiesterase domains span residues 110–137 (LGGV…DWRS) and 320–346 (YSRV…TGNY).

It belongs to the orthopoxvirus OPG042 family.

It is found in the virion. In terms of biological role, DNA nicking enzyme that cleaves extruded cruciform DNA at its tip. Probably nicks viral hairpins. This is Virion nicking-joining enzyme (OPG042) from Homo sapiens (Human).